The chain runs to 507 residues: E3 ubiquitin-protein ligase makorin-3 (507 aa).

Residues 1–21 (MEEPAAPSEAHEAAGAQAGAE) are compositionally biased toward low complexity. Disordered stretches follow at residues 1 to 48 (MEEP…DSAL) and 69 to 89 (RGGL…PLPS). The C3H1-type 1 zinc-finger motif lies at 95 to 122 (WTKQIICRYYIHGQCKEGENCRYSHDLS). The interval 126-149 (MATEGGVSPPGASAGGGPSTAAHI) is disordered. The segment at 238–265 (GSGLRFCYYASRGVCFRGESCMYLHGDI) adopts a C3H1-type 2 zinc-finger fold. The tract at residues 266–293 (CDMCGLQTLHPMDAAQREEHMRACIEAH) is makorin-type Cys-His. An RING-type zinc finger spans residues 311-365 (CGICMEVVYEKANPNDRRFGILSNCNHSFCIRCIRRWRSARQFENRIVKSCPQCR). The segment at 394–423 (AMSNKACRYFAEGRGNCPFGDTCFYKHEYP) adopts a C3H1-type 3 zinc-finger fold.

Ubiquitous.

It localises to the nucleus. The enzyme catalyses S-ubiquitinyl-[E2 ubiquitin-conjugating enzyme]-L-cysteine + [acceptor protein]-L-lysine = [E2 ubiquitin-conjugating enzyme]-L-cysteine + N(6)-ubiquitinyl-[acceptor protein]-L-lysine.. Its pathway is protein modification; protein ubiquitination. E3 ubiquitin ligase catalyzing the covalent attachment of ubiquitin moieties onto substrate proteins. Acts as a key developmental timer that helps ensure puberty begins at the appropriate age, by inhibiting premature activation of the reproductive hormone cascade. Epigenetically regulates GNRH1 transcription by disrupting the binding of methyl-DNA binding protein 3/MBD3 to the promoter of GNRH1. Mechanistically, mediates the non-proteolytic ubiquitination of MBD3 at multiple sites with 'Lys27' ubiquitin linkages and thereby regulates the methylation status of the genome, including GNRH1 promoter. Modulates the stability and translation of GNRH1 mRNA by mediating the non-proteolytic ubiquitination of PABP family members PABPC1, PABPC3 and PABPC4 at multiple sites. Also participates in the maintenance of genomic and epigenomic stability by regulating the abundance of APEX2 via 'Lys-48'-linked ubiquitination. The protein is E3 ubiquitin-protein ligase makorin-3 (MKRN3) of Homo sapiens (Human).